Reading from the N-terminus, the 164-residue chain is MVATSKPKSEPKIAVKAQYVKDLSFENPDPINSLFKITEKPKIDTKLDINITKLSEDNHFEVELSTNVSATCNDKKIFHIEVVYAGIFQLTNISEEDKKFILSVRCPEIIFPYVRQIISESTQKGGFLPLMIDYIDFAEIISNTQTTNNQQELIKPEFDVSNKQ.

Belongs to the SecB family. In terms of assembly, homotetramer, a dimer of dimers. One homotetramer interacts with 1 SecA dimer.

It localises to the cytoplasm. One of the proteins required for the normal export of preproteins out of the cell cytoplasm. It is a molecular chaperone that binds to a subset of precursor proteins, maintaining them in a translocation-competent state. It also specifically binds to its receptor SecA. The chain is Protein-export protein SecB from Orientia tsutsugamushi (strain Ikeda) (Rickettsia tsutsugamushi).